A 424-amino-acid chain; its full sequence is Serine hydroxymethyltransferase 1 (424 aa).

(6S)-5,6,7,8-tetrahydrofolate contacts are provided by residues Leu-125 and 129-131 (GHL). Lys-234 is modified (N6-(pyridoxal phosphate)lysine).

Belongs to the SHMT family. As to quaternary structure, homodimer. Requires pyridoxal 5'-phosphate as cofactor.

It is found in the cytoplasm. It carries out the reaction (6R)-5,10-methylene-5,6,7,8-tetrahydrofolate + glycine + H2O = (6S)-5,6,7,8-tetrahydrofolate + L-serine. It participates in one-carbon metabolism; tetrahydrofolate interconversion. It functions in the pathway amino-acid biosynthesis; glycine biosynthesis; glycine from L-serine: step 1/1. Functionally, catalyzes the reversible interconversion of serine and glycine with tetrahydrofolate (THF) serving as the one-carbon carrier. This reaction serves as the major source of one-carbon groups required for the biosynthesis of purines, thymidylate, methionine, and other important biomolecules. Also exhibits THF-independent aldolase activity toward beta-hydroxyamino acids, producing glycine and aldehydes, via a retro-aldol mechanism. The polypeptide is Serine hydroxymethyltransferase 1 (Burkholderia lata (strain ATCC 17760 / DSM 23089 / LMG 22485 / NCIMB 9086 / R18194 / 383)).